A 435-amino-acid chain; its full sequence is ATP-dependent protease ATPase subunit HslU (435 aa).

Residues isoleucine 18, glycine 60 to glutamate 65, aspartate 248, glutamate 313, and arginine 385 each bind ATP.

This sequence belongs to the ClpX chaperone family. HslU subfamily. As to quaternary structure, a double ring-shaped homohexamer of HslV is capped on each side by a ring-shaped HslU homohexamer. The assembly of the HslU/HslV complex is dependent on binding of ATP.

The protein resides in the cytoplasm. Functionally, ATPase subunit of a proteasome-like degradation complex; this subunit has chaperone activity. The binding of ATP and its subsequent hydrolysis by HslU are essential for unfolding of protein substrates subsequently hydrolyzed by HslV. HslU recognizes the N-terminal part of its protein substrates and unfolds these before they are guided to HslV for hydrolysis. In Rhizobium johnstonii (strain DSM 114642 / LMG 32736 / 3841) (Rhizobium leguminosarum bv. viciae), this protein is ATP-dependent protease ATPase subunit HslU.